Consider the following 329-residue polypeptide: DNA-directed RNA polymerase subunit alpha (329 aa).

Positions 1–235 are alpha N-terminal domain (alpha-NTD); it reads MQGSVIEFLK…EQLDAFVDLR (235 aa). The tract at residues 249–329 is alpha C-terminal domain (alpha-CTD); it reads FDPILLRPVD…NWPPASIAED (81 aa).

Belongs to the RNA polymerase alpha chain family. As to quaternary structure, homodimer. The RNAP catalytic core consists of 2 alpha, 1 beta, 1 beta' and 1 omega subunit. When a sigma factor is associated with the core the holoenzyme is formed, which can initiate transcription.

It catalyses the reaction RNA(n) + a ribonucleoside 5'-triphosphate = RNA(n+1) + diphosphate. Functionally, DNA-dependent RNA polymerase catalyzes the transcription of DNA into RNA using the four ribonucleoside triphosphates as substrates. The chain is DNA-directed RNA polymerase subunit alpha from Haemophilus ducreyi (strain 35000HP / ATCC 700724).